A 567-amino-acid polypeptide reads, in one-letter code: WD repeat-containing protein 20 (567 aa).

At alanine 2 the chain carries N-acetylalanine. WD repeat units follow at residues isoleucine 147–alanine 187, valine 216–lysine 257, serine 258–arginine 297, and serine 345–histidine 389. Phosphoserine occurs at positions 355 and 358. Positions proline 408–alanine 441 are disordered. Composition is skewed to polar residues over residues serine 411 to asparagine 421 and arginine 429 to alanine 441. Serine 430, serine 432, and serine 463 each carry phosphoserine. Positions lysine 468–serine 481 are enriched in basic residues. Residues lysine 468–leucine 493 are disordered. The WD 5 repeat unit spans residues isoleucine 529 to glutamine 566.

Interacts with USP12; promotes translocation of USP12/WDR20 to the plasma membrane. Component of the USP12/WDR20/WDR48 deubiquitinating complex. Interacts with USP46; contributes to the cytoplasmic localization of the USP46/WDR20 complex. Component of the USP12/DMWD/WDR48 deubiquitinating complex.

Its subcellular location is the cytoplasm. The protein localises to the nucleus. Regulator of deubiquitinating complexes. Activates deubiquitinating activity of complexes containing USP12. Anchors at the base of the ubiquitin-contacting loop of USP12 and remotely modulates the catalytic center of the enzyme. Regulates shuttling of complexes containing USP12 between the plasma membrane, cytoplasm and nucleus. The polypeptide is WD repeat-containing protein 20 (Wdr20) (Mus musculus (Mouse)).